The chain runs to 1795 residues: Type III effector AvrE (1795 aa).

A compositionally biased stretch (polar residues) spans 1-18 (MQSPSIHRNTGSIIQPTV). The segment at 1–227 (MQSPSIHRNT…PPREPMLWRS (227 aa)) is disordered. A compositionally biased stretch (low complexity) spans 60 to 75 (KSKAPQQKAATPPTAK). 2 stretches are compositionally biased toward polar residues: residues 97-109 (GFSN…THSA) and 117-127 (HPNQASSSGAQ). Positions 129–154 (HEIHPEAAPRKNLRVRFDLPQDRLER) are enriched in basic and acidic residues. The segment covering 174–191 (ATRQFRSPDSHLQGSDGT) has biased composition (polar residues). The segment covering 203 to 215 (PSSSGSKIGDSDG) has biased composition (low complexity). 2 consecutive short sequence motifs (wxxxE) follow at residues 393-397 (WKIPE) and 829-833 (WQRFE). The interval 1461 to 1488 (QIGGSHTAPTGTPASAPGPTPASQTAAN) is disordered. Residues 1467-1487 (TAPTGTPASAPGPTPASQTAA) are compositionally biased toward low complexity. The ERMRS signature appears at 1787-1790 (KKEG).

It belongs to the AvrE family. In planta interaction assays, interacts with the A.thaliana protein phosphatase 2A (PP2A) via direct interaction/association with specific B' regulatory subunits.

The protein resides in the secreted. It localises to the host cell. It is found in the host cell membrane. With respect to regulation, polyamidoamine dendrimers inhibit channel and virulence activities. Its function is as follows. Major virulence factor that may function as a water- and solute-permeable channel dedicated to creating osmotic/water potential perturbation and a water- and nutrient-rich apoplast in which bacteria multiply within the infected plant tissues. Expression in Xenopus oocytes results in inward and outward currents, permeability to water and osmolarity-dependent oocyte swelling and bursting. Elicits cell death in host tomato leaves and in non-host Nicotiana tabacum leaves. Acts within plant cells and promotes lesion formation. The combined action of AvrE and HopM1 is particularly important in promoting bacterial growth in plants. Contributes to the down-regulation of a specific subset of A.thaliana genes during infection, including NHL13, which is required for antibacterial immunity. The polypeptide is Type III effector AvrE (Pseudomonas syringae pv. tomato (strain ATCC BAA-871 / DC3000)).